Reading from the N-terminus, the 314-residue chain is Putative S-adenosyl-L-methionine-dependent methyltransferase MMAR_5323 (314 aa).

S-adenosyl-L-methionine is bound by residues Asp132 and 161-162 (DL).

The protein belongs to the UPF0677 family.

Exhibits S-adenosyl-L-methionine-dependent methyltransferase activity. This chain is Putative S-adenosyl-L-methionine-dependent methyltransferase MMAR_5323, found in Mycobacterium marinum (strain ATCC BAA-535 / M).